A 1099-amino-acid chain; its full sequence is ATP-dependent helicase/deoxyribonuclease subunit B (1099 aa).

[4Fe-4S] cluster-binding residues include cysteine 766, cysteine 1056, cysteine 1059, and cysteine 1065.

Belongs to the helicase family. AddB/RexB type 2 subfamily. As to quaternary structure, heterodimer of AddA and RexB. Requires Mg(2+) as cofactor. [4Fe-4S] cluster serves as cofactor.

Functionally, the heterodimer acts as both an ATP-dependent DNA helicase and an ATP-dependent, dual-direction single-stranded exonuclease. Recognizes the chi site generating a DNA molecule suitable for the initiation of homologous recombination. This subunit has 5' -&gt; 3' nuclease activity but not helicase activity. This chain is ATP-dependent helicase/deoxyribonuclease subunit B, found in Lactococcus lactis subsp. lactis (strain IL1403) (Streptococcus lactis).